The sequence spans 235 residues: UPF0758 protein A1S_2918 (235 aa).

Residues 1–20 (MNTSIKNWPEQERPRERLLQ) are disordered. A compositionally biased stretch (basic and acidic residues) spans 9–18 (PEQERPRERL). The region spanning 105 to 227 (SLHSSHLVLD…SFSFAEQQLL (123 aa)) is the MPN domain. Zn(2+) is bound by residues His176, His178, and Asp189. The JAMM motif signature appears at 176 to 189 (HNHPFGSPQPSPED).

This sequence belongs to the UPF0758 family.

This Acinetobacter baumannii (strain ATCC 17978 / DSM 105126 / CIP 53.77 / LMG 1025 / NCDC KC755 / 5377) protein is UPF0758 protein A1S_2918.